The sequence spans 81 residues: Putative membrane protein insertion efficiency factor (81 aa).

The protein belongs to the UPF0161 family.

It localises to the cell inner membrane. Its function is as follows. Could be involved in insertion of integral membrane proteins into the membrane. The protein is Putative membrane protein insertion efficiency factor of Legionella pneumophila subsp. pneumophila (strain Philadelphia 1 / ATCC 33152 / DSM 7513).